The chain runs to 567 residues: Pyruvate decarboxylase (567 aa).

Residues Asp-28 and His-117 each contribute to the pyruvate site. Thiamine diphosphate-binding positions include Thr-393 and 416–418 (GSI). Asp-447 is a Mg(2+) binding site. Thiamine diphosphate is bound by residues 448-449 (GS) and 475-480 (NDGYTI). 2 residues coordinate Mg(2+): Asn-475 and Gly-477. Pyruvate is bound at residue Glu-481.

The protein belongs to the TPP enzyme family. Homotetramer. It depends on Mg(2+) as a cofactor. The cofactor is thiamine diphosphate.

The protein localises to the cytoplasm. The enzyme catalyses a 2-oxocarboxylate + H(+) = an aldehyde + CO2. It catalyses the reaction pyruvate + H(+) = acetaldehyde + CO2. The polypeptide is Pyruvate decarboxylase (PDC11) (Candida albicans (strain SC5314 / ATCC MYA-2876) (Yeast)).